Reading from the N-terminus, the 189-residue chain is Parkinson disease protein 7 homolog (189 aa).

Ala2 is modified (N-acetylalanine; in Protein/nucleic acid deglycase DJ-1, N-terminally processed). Residues Cys46 and Cys53 are each lipidated (S-palmitoyl cysteine). Residue Tyr67 is modified to Phosphotyrosine. Cys106 (nucleophile) is an active-site residue. A Cysteine sulfinic acid (-SO2H); alternate modification is found at Cys106. A lipid anchor (S-palmitoyl cysteine; alternate) is attached at Cys106. His126 is a catalytic residue. Residue Lys130 forms a Glycyl lysine isopeptide (Lys-Gly) (interchain with G-Cter in SUMO) linkage. N6-acetyllysine is present on Lys148. Position 182 is an N6-succinyllysine (Lys182).

It belongs to the peptidase C56 family. In terms of assembly, homodimer. Binds EFCAB6/DJBP and PIAS2. Part of a ternary complex containing PARK7, EFCAB6/DJBP and AR. Interacts (via N-terminus) with OTUD7B. Interacts with BBS1, HIPK1, CLCF1 and MTERF. Forms a complex with PINK1 and PRKN. Interacts (via C-terminus) with NCF1; the interaction is enhanced by LPS and modulates NCF1 phosphorylation and membrane translocation. Interacts with NENF. Requires Deglycase activity does not require glutathione as a cofactor, however, glycated glutathione constitutes a PARK7 substrate. as cofactor. Post-translationally, sumoylated on Lys-130 by PIAS2 or PIAS4; which is essential for cell-growth promoting activity and transforming activity. Undergoes cleavage of a C-terminal peptide and subsequent activation of protease activity in response to oxidative stress. As to expression, detected in liver, heart, spleen and testis (at protein level). Detected in liver, heart, spleen, kidney, epididymidis, vas deferens, sperm cells and testis.

Its subcellular location is the cell membrane. The protein localises to the cytoplasm. It localises to the nucleus. It is found in the membrane raft. The protein resides in the mitochondrion. Its subcellular location is the endoplasmic reticulum. It catalyses the reaction N(omega)-(1-hydroxy-2-oxopropyl)-L-arginyl-[protein] + H2O = lactate + L-arginyl-[protein] + H(+). The enzyme catalyses N(6)-(1-hydroxy-2-oxopropyl)-L-lysyl-[protein] + H2O = lactate + L-lysyl-[protein] + H(+). It carries out the reaction S-(1-hydroxy-2-oxopropyl)-L-cysteinyl-[protein] + H2O = lactate + L-cysteinyl-[protein] + H(+). The catalysed reaction is N(omega)-(1-hydroxy-2-oxoethyl)-L-arginyl-[protein] + H2O = L-arginyl-[protein] + glycolate + H(+). It catalyses the reaction N(6)-(1-hydroxy-2-oxoethyl)-L-lysyl-[protein] + H2O = glycolate + L-lysyl-[protein] + H(+). The enzyme catalyses S-(1-hydroxy-2-oxoethyl)-L-cysteinyl-[protein] + H2O = glycolate + L-cysteinyl-[protein] + H(+). It carries out the reaction N(2)-(1-hydroxy-2-oxopropyl)-dGTP + H2O = lactate + dGTP + H(+). The catalysed reaction is N(2)-(1-hydroxy-2-oxopropyl)-GTP + H2O = lactate + GTP + H(+). It catalyses the reaction N(2)-(1-hydroxy-2-oxopropyl)-GDP + H2O = lactate + GDP + H(+). The enzyme catalyses N(2)-(1-hydroxy-2-oxopropyl)-GMP + H2O = lactate + GMP + H(+). It carries out the reaction N(2)-(1-hydroxy-2-oxoethyl)-dGTP + H2O = dGTP + glycolate + H(+). The catalysed reaction is N(2)-(1-hydroxy-2-oxoethyl)-GTP + H2O = glycolate + GTP + H(+). It catalyses the reaction N(2)-(1-hydroxy-2-oxoethyl)-GDP + H2O = glycolate + GDP + H(+). The enzyme catalyses N(2)-(1-hydroxy-2-oxoethyl)-GMP + H2O = glycolate + GMP + H(+). It carries out the reaction an N(2)-(1-hydroxy-2-oxopropyl)-guanosine in RNA + H2O = a guanosine in RNA + lactate + H(+). The catalysed reaction is an N(2)-(1-hydroxy-2-oxopropyl)-2'-deoxyguanosine in DNA + H2O = a 2'-deoxyguanosine in DNA + lactate + H(+). It catalyses the reaction an N(2)-(1-hydroxy-2-oxoethyl)-guanosine in RNA + H2O = a guanosine in RNA + glycolate + H(+). The enzyme catalyses an N(2)-(1-hydroxy-2-oxoethyl)-2'-deoxyguanosine in DNA + H2O = a 2'-deoxyguanosine in DNA + glycolate + H(+). Functionally, multifunctional protein with controversial molecular function which plays an important role in cell protection against oxidative stress and cell death acting as oxidative stress sensor and redox-sensitive chaperone and protease. It is involved in neuroprotective mechanisms like the stabilization of NFE2L2 and PINK1 proteins, male fertility as a positive regulator of androgen signaling pathway as well as cell growth and transformation through, for instance, the modulation of NF-kappa-B signaling pathway. Has been described as a protein and nucleotide deglycase that catalyzes the deglycation of the Maillard adducts formed between amino groups of proteins or nucleotides and reactive carbonyl groups of glyoxals. But this function is rebuted by other works. As a protein deglycase, repairs methylglyoxal- and glyoxal-glycated proteins, and releases repaired proteins and lactate or glycolate, respectively. Deglycates cysteine, arginine and lysine residues in proteins, and thus reactivates these proteins by reversing glycation by glyoxals. Acts on early glycation intermediates (hemithioacetals and aminocarbinols), preventing the formation of advanced glycation endproducts (AGE) that cause irreversible damage. Also functions as a nucleotide deglycase able to repair glycated guanine in the free nucleotide pool (GTP, GDP, GMP, dGTP) and in DNA and RNA. Is thus involved in a major nucleotide repair system named guanine glycation repair (GG repair), dedicated to reversing methylglyoxal and glyoxal damage via nucleotide sanitization and direct nucleic acid repair. Protects histones from adduction by methylglyoxal, controls the levels of methylglyoxal-derived argininine modifications on chromatin. Able to remove the glycations and restore histone 3, histone glycation disrupts both local and global chromatin architecture by altering histone-DNA interactions as well as histone acetylation and ubiquitination levels. Displays a very low glyoxalase activity that may reflect its deglycase activity. Eliminates hydrogen peroxide and protects cells against hydrogen peroxide-induced cell death. Required for correct mitochondrial morphology and function as well as for autophagy of dysfunctional mitochondria. Plays a role in regulating expression or stability of the mitochondrial uncoupling proteins SLC25A14 and SLC25A27 in dopaminergic neurons of the substantia nigra pars compacta and attenuates the oxidative stress induced by calcium entry into the neurons via L-type channels during pacemaking. Regulates astrocyte inflammatory responses, may modulate lipid rafts-dependent endocytosis in astrocytes and neuronal cells. In pancreatic islets, involved in the maintenance of mitochondrial reactive oxygen species (ROS) levels and glucose homeostasis in an age- and diet dependent manner. Protects pancreatic beta cells from cell death induced by inflammatory and cytotoxic setting. Binds to a number of mRNAs containing multiple copies of GG or CC motifs and partially inhibits their translation but dissociates following oxidative stress. Metal-binding protein able to bind copper as well as toxic mercury ions, enhances the cell protection mechanism against induced metal toxicity. In macrophages, interacts with the NADPH oxidase subunit NCF1 to direct NADPH oxidase-dependent ROS production, and protects against sepsis. The protein is Parkinson disease protein 7 homolog (PARK7) of Mesocricetus auratus (Golden hamster).